Consider the following 179-residue polypeptide: Large ribosomal subunit protein uL5 (179 aa).

The protein belongs to the universal ribosomal protein uL5 family. In terms of assembly, part of the 50S ribosomal subunit; part of the 5S rRNA/L5/L18/L25 subcomplex. Contacts the 5S rRNA and the P site tRNA. Forms a bridge to the 30S subunit in the 70S ribosome.

Functionally, this is one of the proteins that bind and probably mediate the attachment of the 5S RNA into the large ribosomal subunit, where it forms part of the central protuberance. In the 70S ribosome it contacts protein S13 of the 30S subunit (bridge B1b), connecting the 2 subunits; this bridge is implicated in subunit movement. Contacts the P site tRNA; the 5S rRNA and some of its associated proteins might help stabilize positioning of ribosome-bound tRNAs. The chain is Large ribosomal subunit protein uL5 from Janthinobacterium sp. (strain Marseille) (Minibacterium massiliensis).